The primary structure comprises 557 residues: MSNPRHNEREVRSPRGDELNAKSWLTEAPLRMLMNNLDPDVAERPHELVVYGGIGRAARTWDDFDRIVATLKTLNDDETLLVQSGKPVGVFRTHKDAPRVLIANSNLVPHWANWDHFNELDKKDLAMYGQMTAGSWIYIGAQGIVQGTYETFVEAGRQHYGGNLKGRWILTGGLGGMGGAQPLAAVMAGACCLAVECDETRADFRLRTRYVDEKTHSLDEALAKIDAWTKAGEAKSIALIGNAAEIFPELVKRGVKPDIVTDQTSAHDPVHGYLPLGWTVAEWRAKQENDPKAVEKVARASMKVQVQAMLDFWNAGIPTVDYGNNIRQMALEEGLENAFAFPGFVPAYIRPLFCRGIGPFRWAALSGDPEDIAKTDAKVKELLPDNKHLHNWLDMAKERIAFQGLPARICWVGLGDRHRLGLAFNEMVRNGELKAPIVIGRDHLDSGSVASPNRETEAMKDGSDAVSDWPLLNALLNTASGATWVSLHHGGGVGMGFSQHAGMVICCDGTEDADRRLERVLWNDPATGVMRHADAGYDIALDWARKQGLRLPAILGN.

The segment at 1-20 (MSNPRHNEREVRSPRGDELN) is disordered. Residues 52 to 53 (GG), Q130, 176 to 178 (GMG), E196, R201, 242 to 243 (NA), 263 to 267 (QTSAH), 273 to 274 (YL), and Y322 each bind NAD(+). C410 is an active-site residue. G492 is an NAD(+) binding site.

Belongs to the urocanase family. NAD(+) is required as a cofactor.

Its subcellular location is the cytoplasm. The catalysed reaction is 4-imidazolone-5-propanoate = trans-urocanate + H2O. The protein operates within amino-acid degradation; L-histidine degradation into L-glutamate; N-formimidoyl-L-glutamate from L-histidine: step 2/3. Functionally, catalyzes the conversion of urocanate to 4-imidazolone-5-propionate. The polypeptide is Urocanate hydratase (Brucella canis (strain ATCC 23365 / NCTC 10854 / RM-666)).